Here is a 183-residue protein sequence, read N- to C-terminus: MDQNVSTALKSFTQRYIDLWQQQTGRPPASEELYGVPSPCNIETQDNQVFWLPQPFVGEANLANVERALEIQLHPDIHEFYTQQYAGDMKADLGDHRFTLLQVWSEDDFIRLQENLIGHLVTQKRLKLSPTLFLATTESEMTMASLCNVSGNMVLEEFGSGKRTLLASTLAHFLDALRPVFPE.

It belongs to the Syd family.

It is found in the cell inner membrane. Its function is as follows. Interacts with the SecY protein in vivo. May bind preferentially to an uncomplexed state of SecY, thus functioning either as a chelating agent for excess SecY in the cell or as a regulatory factor that negatively controls the translocase function. This is Protein Syd from Yersinia enterocolitica serotype O:8 / biotype 1B (strain NCTC 13174 / 8081).